Here is a 101-residue protein sequence, read N- to C-terminus: Integration host factor subunit beta (101 aa).

The disordered stretch occupies residues 57-101 (PARAGRNPRTGAHVPVDQKSVPFFKTGKEMRERLNRDHPDPGAAD). Positions 82–101 (TGKEMRERLNRDHPDPGAAD) are enriched in basic and acidic residues.

It belongs to the bacterial histone-like protein family. In terms of assembly, heterodimer of an alpha and a beta chain.

This protein is one of the two subunits of integration host factor, a specific DNA-binding protein that functions in genetic recombination as well as in transcriptional and translational control. This chain is Integration host factor subunit beta, found in Bradyrhizobium diazoefficiens (strain JCM 10833 / BCRC 13528 / IAM 13628 / NBRC 14792 / USDA 110).